Consider the following 293-residue polypeptide: Homoserine O-acetyltransferase (293 aa).

Cys-141 serves as the catalytic Acyl-thioester intermediate. Substrate contacts are provided by Lys-162 and Ser-190. His-234 acts as the Proton acceptor in catalysis. Glu-236 is an active-site residue. Arg-248 provides a ligand contact to substrate.

Belongs to the MetA family.

Its subcellular location is the cytoplasm. The enzyme catalyses L-homoserine + acetyl-CoA = O-acetyl-L-homoserine + CoA. The protein operates within amino-acid biosynthesis; L-methionine biosynthesis via de novo pathway; O-acetyl-L-homoserine from L-homoserine: step 1/1. Functionally, transfers an acetyl group from acetyl-CoA to L-homoserine, forming acetyl-L-homoserine. In Campylobacter jejuni subsp. jejuni serotype O:2 (strain ATCC 700819 / NCTC 11168), this protein is Homoserine O-acetyltransferase.